We begin with the raw amino-acid sequence, 925 residues long: Protein translocase subunit SecA (925 aa).

ATP-binding positions include Gln-87, 105–109 (GEGKT), and Asp-515. Positions 909, 911, 920, and 921 each coordinate Zn(2+).

It belongs to the SecA family. In terms of assembly, monomer and homodimer. Part of the essential Sec protein translocation apparatus which comprises SecA, SecYEG and auxiliary proteins SecDF-YajC and YidC. Zn(2+) is required as a cofactor.

Its subcellular location is the cell inner membrane. The protein resides in the cytoplasm. The enzyme catalyses ATP + H2O + cellular proteinSide 1 = ADP + phosphate + cellular proteinSide 2.. Part of the Sec protein translocase complex. Interacts with the SecYEG preprotein conducting channel. Has a central role in coupling the hydrolysis of ATP to the transfer of proteins into and across the cell membrane, serving both as a receptor for the preprotein-SecB complex and as an ATP-driven molecular motor driving the stepwise translocation of polypeptide chains across the membrane. This Cupriavidus taiwanensis (strain DSM 17343 / BCRC 17206 / CCUG 44338 / CIP 107171 / LMG 19424 / R1) (Ralstonia taiwanensis (strain LMG 19424)) protein is Protein translocase subunit SecA.